Consider the following 341-residue polypeptide: tRNA N6-adenosine threonylcarbamoyltransferase (341 aa).

2 residues coordinate Fe cation: histidine 112 and histidine 116. Substrate contacts are provided by residues 138-142 (TVSGG), aspartate 171, glycine 184, aspartate 188, and asparagine 279. Aspartate 307 contributes to the Fe cation binding site.

The protein belongs to the KAE1 / TsaD family. Fe(2+) is required as a cofactor.

It localises to the cytoplasm. The catalysed reaction is L-threonylcarbamoyladenylate + adenosine(37) in tRNA = N(6)-L-threonylcarbamoyladenosine(37) in tRNA + AMP + H(+). Functionally, required for the formation of a threonylcarbamoyl group on adenosine at position 37 (t(6)A37) in tRNAs that read codons beginning with adenine. Is involved in the transfer of the threonylcarbamoyl moiety of threonylcarbamoyl-AMP (TC-AMP) to the N6 group of A37, together with TsaE and TsaB. TsaD likely plays a direct catalytic role in this reaction. The polypeptide is tRNA N6-adenosine threonylcarbamoyltransferase (Riemerella anatipestifer (Moraxella anatipestifer)).